Consider the following 101-residue polypeptide: UPF0235 protein MmarC7_0309 (101 aa).

It belongs to the UPF0235 family.

The protein is UPF0235 protein MmarC7_0309 of Methanococcus maripaludis (strain C7 / ATCC BAA-1331).